A 234-amino-acid polypeptide reads, in one-letter code: Probable septum site-determining protein MinC (234 aa).

The protein belongs to the MinC family. Interacts with MinD and FtsZ.

Cell division inhibitor that blocks the formation of polar Z ring septums. Rapidly oscillates between the poles of the cell to destabilize FtsZ filaments that have formed before they mature into polar Z rings. Prevents FtsZ polymerization. This chain is Probable septum site-determining protein MinC, found in Pseudoalteromonas translucida (strain TAC 125).